We begin with the raw amino-acid sequence, 833 residues long: EF-hand domain-containing family member B (833 aa).

EF-hand domains lie at glutamine 561–serine 596 and leucine 597–methionine 632. Aspartate 574, aspartate 578, methionine 580, glutamate 585, aspartate 610, aspartate 612, aspartate 614, and glutamate 621 together coordinate Ca(2+).

In terms of assembly, microtubule inner protein component of sperm flagellar doublet microtubules. Interacts with STIM1 and ORAI1; the interactions take place upon Ca(2+)-store depletion and dissociate through a Ca(2+)-dependent mechanism. Interaction with STIM1 inhibits STIM1 interaction with SARAF. As to expression, expressed in airway epithelial cells.

Its subcellular location is the cytoplasm. The protein localises to the cytoskeleton. It is found in the cilium axoneme. The protein resides in the flagellum axoneme. Its function is as follows. Microtubule inner protein (MIP) part of the dynein-decorated doublet microtubules (DMTs) in cilia axoneme, which is required for motile cilia beating. Cytosolic sensor for calcium, modulates the interaction of STIM1 and ORAI1 upon store depletion and the activation of store-operated Ca(2+) entry (SOCE) and NFAT translocation from cytosol to nucleus. The chain is EF-hand domain-containing family member B from Homo sapiens (Human).